A 236-amino-acid polypeptide reads, in one-letter code: Octanoyltransferase (236 aa).

The BPL/LPL catalytic domain occupies 36–220; it reads DQVPDTVLLL…HLAAVLGASS (185 aa). Substrate-binding positions include 76–83, 150–152, and 163–165; these read RGGKITWH, AIG, and GFA. Cys181 acts as the Acyl-thioester intermediate in catalysis.

Belongs to the LipB family.

The protein resides in the cytoplasm. It catalyses the reaction octanoyl-[ACP] + L-lysyl-[protein] = N(6)-octanoyl-L-lysyl-[protein] + holo-[ACP] + H(+). It functions in the pathway protein modification; protein lipoylation via endogenous pathway; protein N(6)-(lipoyl)lysine from octanoyl-[acyl-carrier-protein]: step 1/2. Its function is as follows. Catalyzes the transfer of endogenously produced octanoic acid from octanoyl-acyl-carrier-protein onto the lipoyl domains of lipoate-dependent enzymes. Lipoyl-ACP can also act as a substrate although octanoyl-ACP is likely to be the physiological substrate. This chain is Octanoyltransferase, found in Thermobifida fusca (strain YX).